The primary structure comprises 253 residues: Imidazole glycerol phosphate synthase subunit HisF (253 aa).

Active-site residues include Asp11 and Asp130.

Belongs to the HisA/HisF family. In terms of assembly, heterodimer of HisH and HisF.

It is found in the cytoplasm. The enzyme catalyses 5-[(5-phospho-1-deoxy-D-ribulos-1-ylimino)methylamino]-1-(5-phospho-beta-D-ribosyl)imidazole-4-carboxamide + L-glutamine = D-erythro-1-(imidazol-4-yl)glycerol 3-phosphate + 5-amino-1-(5-phospho-beta-D-ribosyl)imidazole-4-carboxamide + L-glutamate + H(+). Its pathway is amino-acid biosynthesis; L-histidine biosynthesis; L-histidine from 5-phospho-alpha-D-ribose 1-diphosphate: step 5/9. Functionally, IGPS catalyzes the conversion of PRFAR and glutamine to IGP, AICAR and glutamate. The HisF subunit catalyzes the cyclization activity that produces IGP and AICAR from PRFAR using the ammonia provided by the HisH subunit. This Roseobacter denitrificans (strain ATCC 33942 / OCh 114) (Erythrobacter sp. (strain OCh 114)) protein is Imidazole glycerol phosphate synthase subunit HisF.